Consider the following 586-residue polypeptide: Arginine--tRNA ligase (586 aa).

The 'HIGH' region signature appears at 131-141 (ANPTGPMHVGH).

Belongs to the class-I aminoacyl-tRNA synthetase family. In terms of assembly, monomer.

Its subcellular location is the cytoplasm. It carries out the reaction tRNA(Arg) + L-arginine + ATP = L-arginyl-tRNA(Arg) + AMP + diphosphate. This chain is Arginine--tRNA ligase, found in Xanthobacter autotrophicus (strain ATCC BAA-1158 / Py2).